Here is a 130-residue protein sequence, read N- to C-terminus: Large ribosomal subunit protein bL12 (130 aa).

It belongs to the bacterial ribosomal protein bL12 family. In terms of assembly, homodimer. Part of the ribosomal stalk of the 50S ribosomal subunit. Forms a multimeric L10(L12)X complex, where L10 forms an elongated spine to which 2 to 4 L12 dimers bind in a sequential fashion. Binds GTP-bound translation factors.

Its function is as follows. Forms part of the ribosomal stalk which helps the ribosome interact with GTP-bound translation factors. Is thus essential for accurate translation. The protein is Large ribosomal subunit protein bL12 of Synechococcus sp. (strain WH7803).